Consider the following 138-residue polypeptide: Small ribosomal subunit protein uS11c (138 aa).

The disordered stretch occupies residues methionine 1 to valine 22.

The protein belongs to the universal ribosomal protein uS11 family. As to quaternary structure, part of the 30S ribosomal subunit.

It is found in the plastid. This Cuscuta reflexa (Southern Asian dodder) protein is Small ribosomal subunit protein uS11c.